The chain runs to 104 residues: MAEAVIQIEVVYASVQRQVLMTLDVPAGSSVRQALALSGMDREFPELDLAQCAVGIFGKVVADPSTRVLEAGERIEIYRPLLADPMEIRRLRAARAREKRTLPG.

This sequence belongs to the UPF0125 (RnfH) family.

The protein is Protein RnfH of Pseudomonas savastanoi pv. phaseolicola (strain 1448A / Race 6) (Pseudomonas syringae pv. phaseolicola (strain 1448A / Race 6)).